The sequence spans 222 residues: Small ribosomal subunit protein uS3 (222 aa).

In terms of domain architecture, KH type-2 spans 39-107 (IRKYIKTKFY…QININIAEIK (69 aa)).

Belongs to the universal ribosomal protein uS3 family. In terms of assembly, part of the 30S ribosomal subunit. Forms a tight complex with proteins S10 and S14.

In terms of biological role, binds the lower part of the 30S subunit head. Binds mRNA in the 70S ribosome, positioning it for translation. This chain is Small ribosomal subunit protein uS3, found in Carboxydothermus hydrogenoformans (strain ATCC BAA-161 / DSM 6008 / Z-2901).